Consider the following 460-residue polypeptide: 3-isopropylmalate dehydratase large subunit (460 aa).

[4Fe-4S] cluster is bound by residues C341, C401, and C404.

This sequence belongs to the aconitase/IPM isomerase family. LeuC type 1 subfamily. Heterodimer of LeuC and LeuD. Requires [4Fe-4S] cluster as cofactor.

It carries out the reaction (2R,3S)-3-isopropylmalate = (2S)-2-isopropylmalate. It functions in the pathway amino-acid biosynthesis; L-leucine biosynthesis; L-leucine from 3-methyl-2-oxobutanoate: step 2/4. Its function is as follows. Catalyzes the isomerization between 2-isopropylmalate and 3-isopropylmalate, via the formation of 2-isopropylmaleate. In Phocaeicola vulgatus (strain ATCC 8482 / DSM 1447 / JCM 5826 / CCUG 4940 / NBRC 14291 / NCTC 11154) (Bacteroides vulgatus), this protein is 3-isopropylmalate dehydratase large subunit.